We begin with the raw amino-acid sequence, 56 residues long: Large ribosomal subunit protein bL32 (56 aa).

The segment covering 1 to 16 (MAVQKSKKSRSRRGMR) has biased composition (basic residues). The segment at 1–38 (MAVQKSKKSRSRRGMRRSHDAVTPENLSVDPVSGETHR) is disordered.

This sequence belongs to the bacterial ribosomal protein bL32 family.

The protein is Large ribosomal subunit protein bL32 of Colwellia psychrerythraea (strain 34H / ATCC BAA-681) (Vibrio psychroerythus).